The following is a 101-amino-acid chain: Ubiquitin-related modifier 1 homolog (101 aa).

At G101 the chain carries 1-thioglycine. G101 participates in a covalent cross-link: Glycyl lysine isopeptide (Gly-Lys) (interchain with K-? in acceptor proteins).

Belongs to the URM1 family. Interacts with cer. In terms of processing, C-terminal thiocarboxylation occurs in 2 steps, it is first acyl-adenylated (-COAMP) via the hesA/moeB/thiF part of the MOCS3 homolog, then thiocarboxylated (-COSH) via the rhodanese domain of the MOCS3 homolog.

It is found in the cytoplasm. Its pathway is tRNA modification; 5-methoxycarbonylmethyl-2-thiouridine-tRNA biosynthesis. Its function is as follows. Acts as a sulfur carrier required for 2-thiolation of mcm(5)S(2)U at tRNA wobble positions of cytosolic tRNA(Lys), tRNA(Glu) and tRNA(Gln). Serves as sulfur donor in tRNA 2-thiolation reaction by being thiocarboxylated (-COSH) at its C-terminus by MOCS3. The sulfur is then transferred to tRNA to form 2-thiolation of mcm(5)S(2)U. Also acts as a ubiquitin-like protein (UBL) that is covalently conjugated via an isopeptide bond to lysine residues of target proteins such as Prx2/Jafrac1, Ciao1, Eip71CD and GILT1. The thiocarboxylated form serves as substrate for conjugation and oxidative stress specifically induces the formation of UBL-protein conjugates. This chain is Ubiquitin-related modifier 1 homolog, found in Drosophila yakuba (Fruit fly).